Here is a 359-residue protein sequence, read N- to C-terminus: MHLNKLSLFNYKNFSEAGFDFDIKINCFVGKNGIGKTNVLDAIYHLAYGKSYFNPLAVQNIKHGEEFFVIDAELEKNDRTEQIVCSLKKGQKKVLKRNGKAYDKFSDHIGFIPLVIISPADRDLIVEGSETRRKFMDSVISQLDSTYLHQLIQYQKVIVQRNALLKYFALNHTFDNDTLSIYNEQLNEFGKSIFEKRKEFLEEFIPIFNVHHQAITGSEESVQLVYESHLFEKDLLTLLQENINKDRALHYTSSGIHKDDLSFEIDSHPIKKFGSQGQQKSFLIALKLAQFEFLKKQSGVKPILLFDDIFDKLDETRVAKIVEMVNSETFGQLFISDTHPERTEAIVKSTHQTYKIFNL.

Glycine 30–threonine 37 contacts ATP.

This sequence belongs to the RecF family.

The protein resides in the cytoplasm. Its function is as follows. The RecF protein is involved in DNA metabolism; it is required for DNA replication and normal SOS inducibility. RecF binds preferentially to single-stranded, linear DNA. It also seems to bind ATP. This Flavobacterium johnsoniae (strain ATCC 17061 / DSM 2064 / JCM 8514 / BCRC 14874 / CCUG 350202 / NBRC 14942 / NCIMB 11054 / UW101) (Cytophaga johnsonae) protein is DNA replication and repair protein RecF.